The following is a 249-amino-acid chain: Adapter protein MecA (249 aa).

It belongs to the MecA family. As to quaternary structure, homodimer.

Functionally, enables the recognition and targeting of unfolded and aggregated proteins to the ClpC protease or to other proteins involved in proteolysis. The chain is Adapter protein MecA from Streptococcus thermophilus (strain ATCC BAA-491 / LMD-9).